A 247-amino-acid chain; its full sequence is Ice-binding protein (247 aa).

Residues 1–19 (MTFSILSIFVFGLISSSVA) form the signal peptide. Asn-219 is a glycosylation site (N-linked (GlcNAc...) asparagine).

It belongs to the ice-binding protein family.

Its subcellular location is the secreted. Its function is as follows. Binds ice crystals and most probably inhibits their growth in order to prevent cell damage from extracellular ice. This chain is Ice-binding protein, found in Flammulina populicola (Enokitake mushroom).